A 361-amino-acid polypeptide reads, in one-letter code: Outer membrane protein P2 (361 aa).

Residues 1-20 form the signal peptide; the sequence is MKKTLAALIVGAFAASAANA.

It belongs to the Gram-negative porin family. Homotrimer.

The protein localises to the cell outer membrane. In terms of biological role, forms pores that allow passive diffusion of small molecules across the outer membrane. In Haemophilus influenzae, this protein is Outer membrane protein P2 (ompP2).